The chain runs to 288 residues: Polyamine aminopropyltransferase (288 aa).

The region spanning 9 to 238 is the PABS domain; the sequence is ETLHDQFGQY…GIMTFAWATD (230 aa). S-methyl-5'-thioadenosine is bound at residue glutamine 33. Spermidine-binding residues include histidine 64 and aspartate 88. Residues glutamate 108 and 140-141 contribute to the S-methyl-5'-thioadenosine site; that span reads DG. Aspartate 158 serves as the catalytic Proton acceptor. Spermidine is bound at residue 158 to 161; the sequence is DCTD. Proline 165 lines the S-methyl-5'-thioadenosine pocket.

It belongs to the spermidine/spermine synthase family. As to quaternary structure, homodimer or homotetramer.

It is found in the cytoplasm. It carries out the reaction S-adenosyl 3-(methylsulfanyl)propylamine + putrescine = S-methyl-5'-thioadenosine + spermidine + H(+). It functions in the pathway amine and polyamine biosynthesis; spermidine biosynthesis; spermidine from putrescine: step 1/1. Its function is as follows. Catalyzes the irreversible transfer of a propylamine group from the amino donor S-adenosylmethioninamine (decarboxy-AdoMet) to putrescine (1,4-diaminobutane) to yield spermidine. This chain is Polyamine aminopropyltransferase, found in Shigella sonnei (strain Ss046).